The primary structure comprises 382 residues: Palmitoyltransferase ZDHHC16B (382 aa).

Over 1-75 (MRSWRWSVSR…IYWLVDNMTR (75 aa)) the chain is Cytoplasmic. Residues 76-96 (WFGVVFVCLVMALTSSVVVIV) form a helical membrane-spanning segment. Residues 97-107 (YLCVLPIIFSS) are Lumenal-facing. Residues 108 to 130 (YPVYWILWHLCYGHWNLLMVVFH) form a helical membrane-spanning segment. Residues 131–196 (YYKATTTQPG…NNCVGHFNHR (66 aa)) are Cytoplasmic-facing. The region spanning 153–203 (TICKKCIVPKPARTHHCSICNRCILKMDHHCPWLNNCVGHFNHRYFFSFCL) is the DHHC domain. Catalysis depends on Cys183, which acts as the S-palmitoyl cysteine intermediate. A helical membrane pass occupies residues 197–217 (YFFSFCLFMTMGCVYCSISAK). At 218–275 (DMFLDAYNAIESGRYKGGASQGEAVPGAGLIYISFQHQSSYQTPPPAFTHQERMVHKS) the chain is on the lumenal side. The helical transmembrane segment at 276–296 (LVYLWVLTSSVAVALGALTLW) threads the bilayer. The Cytoplasmic segment spans residues 297-382 (HAILITRGET…PAYKSSTTAI (86 aa)).

It belongs to the DHHC palmitoyltransferase family.

Its subcellular location is the endoplasmic reticulum membrane. It carries out the reaction L-cysteinyl-[protein] + hexadecanoyl-CoA = S-hexadecanoyl-L-cysteinyl-[protein] + CoA. Its function is as follows. Palmitoyl acyltransferase that mediates palmitoylation of proteins and is required during embryonic heart development. Involved in the proliferation of neural stem cells by regulating the FGF/ERK pathway. The sequence is that of Palmitoyltransferase ZDHHC16B from Danio rerio (Zebrafish).